The chain runs to 20 residues: Superoxide dismutase [Mn], mitochondrial (20 aa).

The protein belongs to the iron/manganese superoxide dismutase family. As to quaternary structure, homotetramer. Mn(2+) serves as cofactor.

The protein localises to the mitochondrion matrix. The enzyme catalyses 2 superoxide + 2 H(+) = H2O2 + O2. Its function is as follows. Destroys superoxide anion radicals which are normally produced within the cells and which are toxic to biological systems. The chain is Superoxide dismutase [Mn], mitochondrial (SODA) from Hordeum vulgare (Barley).